The primary structure comprises 160 residues: Troponin C, skeletal muscle (160 aa).

EF-hand domains lie at 15–50 (EMIA…LGQN), 51–86 (PTRE…QLKE), 91–126 (KSEE…SGEP), and 127–160 (VSEE…ENIQ). The Ca(2+) site is built by aspartate 28, aspartate 30, aspartate 34, glutamate 39, aspartate 64, aspartate 66, serine 68, threonine 70, glutamate 75, aspartate 104, asparagine 106, aspartate 108, glutamate 115, aspartate 140, asparagine 142, aspartate 144, lysine 146, and glutamate 151.

This sequence belongs to the troponin C family.

Troponin is the central regulatory protein of striated muscle contraction. Tn consists of three components: Tn-I which is the inhibitor of actomyosin ATPase, Tn-T which contains the binding EF-hand for tropomyosin and Tn-C. The binding of calcium to Tn-C abolishes the inhibitory action of Tn on actin filaments. The polypeptide is Troponin C, skeletal muscle (Anguilla anguilla (European freshwater eel)).